An 876-amino-acid polypeptide reads, in one-letter code: MDINTLLNTPDEDVLSLFTPQVARWFKEKYKVFTPPQKGAIPLIKKGKNVLVSSPTGSGKTLAAFLGILDTLIDLGYKNELNKQIYAIYISPLRALNNDMRRNLIEPLTELRNLYPDLPEISIGVRTSDTSSYEKQKMLKKPPHILITTPESFGISLVSPKFREKLSDVKWVIVDEIHELANSKRGAYLAGLLELYKSFIAKNNFVRIGLSATISPLEEVAKFLVGGNGDYEIIDARFVKPTDIQVVSPVKDLVHATEEEVNIGIYSYLVDEIKKHKTTLIFTNTRHAAERVAYKLRKMFEDQNIFDSDLVAAHHSSLSRDVRLEVEEKLKRGELKVVVSSTSLELGIDIGYIDLVTLLSSPKSVSRLLQRVGRAGHHIREVSKGRVVVVDRDDLVECTVLAKLAIDRKIDNIHVPENPLDVLTQLIVAASLITPIEKDKLYEIIKNVYNFRSLSYDEYNNVAEYLAGNYGLDSNKVYAKIRIKDGMISPKRGTRMIFFLNSGTIPDEAMIPVKMENGGYVGNLEEEFVEILAPGDIFVLAGKTYEFIRSEGNSVIVKKSEGQRPTVPSWFSEMLPLAFDSAIEIGKFRGKIAEAIMNEVPKDEVISSIMSEYNLSRFAALSIYNYVKEELLFTGGIVPTDKLLLIEVYDDDDQNRNFIFHGLYGRRTVDALSRAIAYIISKDLNMDVRIAITDNGFAITVPGKQEYEISKVFDKLEPDKMYEILSDVILRTEMIKRRFRHCAERSFMLLKRYKGRETSIDRRQINSEVLLGVVRQIEHFPVLKETVREILEDYMDIKRAIEIVEKIRNGDIKVATIGPNQVPSPFAHNILVKQYTDVVLAEDKRELLKELHNKVIEFLRNKGIDIDLEYTEAGIK.

ATP is bound by residues glutamine 37, lysine 60, threonine 61, aspartate 175, glutamate 176, arginine 374, and histidine 377. One can recognise a Helicase ATP-binding domain in the interval 41–232 (IPLIKKGKNV…FLVGGNGDYE (192 aa)). A DEAH box motif is present at residues 175-178 (DEIH). The 173-residue stretch at 249-421 (PVKDLVHATE…NIHVPENPLD (173 aa)) folds into the Helicase C-terminal domain. The segment at 422–506 (VLTQLIVAAS…IFFLNSGTIP (85 aa)) is WH domain. Positions 507-876 (DEAMIPVKME…DLEYTEAGIK (370 aa)) are domain 4.

The protein belongs to the Lhr helicase family. Lhr-Core subfamily. Monomer.

The enzyme catalyses Couples ATP hydrolysis with the unwinding of duplex DNA by translocating in the 3'-5' direction.. It catalyses the reaction ATP + H2O = ADP + phosphate + H(+). Functionally, probably part of a 4-gene DNA damage response locus in which the upstream ups system, in combination with this downstream locus, functions in homologous recombination to rescue Sulfolobales from DNA-damaging threats. DNA helicase that translocates in a 3'-5' direction on single-stranded (ss)DNA. Binds Holliday junction (HJ) DNA, Y-shaped DNA, DNA with a 3'-overhang and single-stranded (ss)DNA with high affinity; binds double-stranded (ds)DNA with less affinity. Has helicase activity on DNA with a 3'-overhang, Y-shaped DNA and HJ DNA. Does not unwind blunt-ended dsDNA or DNA with a 5'-overhang. This is ATP-dependent helicase Lhr-Core from Sulfolobus acidocaldarius (strain ATCC 33909 / DSM 639 / JCM 8929 / NBRC 15157 / NCIMB 11770).